We begin with the raw amino-acid sequence, 83 residues long: MPKRVLTGTVVSDKTDKTVVVLVERKVKHPLYGKIIRLSKKYHAHDEQNAYHEGETVRIEECAPISKLKSWRVLEKADKASAA.

This sequence belongs to the universal ribosomal protein uS17 family. Part of the 30S ribosomal subunit.

In terms of biological role, one of the primary rRNA binding proteins, it binds specifically to the 5'-end of 16S ribosomal RNA. In Zymomonas mobilis subsp. mobilis (strain ATCC 31821 / ZM4 / CP4), this protein is Small ribosomal subunit protein uS17.